A 259-amino-acid chain; its full sequence is Activator of lactoyl-CoA dehydratase (259 aa).

The [4Fe-4S] cluster site is built by Cys-125 and Cys-164.

In terms of assembly, homodimer. Requires [4Fe-4S] cluster as cofactor.

In terms of biological role, required for the activation of lactoyl-CoA dehydratase. This protein is extremely sensitive towards oxygen. The protein is Activator of lactoyl-CoA dehydratase (lcdC) of Anaerotignum propionicum (Clostridium propionicum).